Reading from the N-terminus, the 138-residue chain is Putative pre-16S rRNA nuclease (138 aa).

Belongs to the YqgF nuclease family.

Its subcellular location is the cytoplasm. Its function is as follows. Could be a nuclease involved in processing of the 5'-end of pre-16S rRNA. This Caldicellulosiruptor saccharolyticus (strain ATCC 43494 / DSM 8903 / Tp8T 6331) protein is Putative pre-16S rRNA nuclease.